Consider the following 308-residue polypeptide: 4-diphosphocytidyl-2-C-methyl-D-erythritol kinase (308 aa).

Lys-24 is a catalytic residue. An ATP-binding site is contributed by 118–128; sequence PVGAGMAGGSA. The active site involves Asp-160.

This sequence belongs to the GHMP kinase family. IspE subfamily.

The catalysed reaction is 4-CDP-2-C-methyl-D-erythritol + ATP = 4-CDP-2-C-methyl-D-erythritol 2-phosphate + ADP + H(+). It participates in isoprenoid biosynthesis; isopentenyl diphosphate biosynthesis via DXP pathway; isopentenyl diphosphate from 1-deoxy-D-xylulose 5-phosphate: step 3/6. In terms of biological role, catalyzes the phosphorylation of the position 2 hydroxy group of 4-diphosphocytidyl-2C-methyl-D-erythritol. The protein is 4-diphosphocytidyl-2-C-methyl-D-erythritol kinase of Bifidobacterium adolescentis (strain ATCC 15703 / DSM 20083 / NCTC 11814 / E194a).